The primary structure comprises 126 residues: MAIDISGRHHENDIFFRVYAGVLVEIKADRIVHVEKIDVMVKEEETQKLRDIVKEVKELIDKVGDEFDYILCERGEFFNISKDIISAILKKEVIFPKTRGELEAINIAHHVSYSVRKLLIEEKRKS.

This is an uncharacterized protein from Methanocaldococcus jannaschii (strain ATCC 43067 / DSM 2661 / JAL-1 / JCM 10045 / NBRC 100440) (Methanococcus jannaschii).